The sequence spans 234 residues: tRNA (guanine-N(1)-)-methyltransferase (234 aa).

S-adenosyl-L-methionine is bound by residues Gly-112 and 132–137 (IGDFIL).

Belongs to the RNA methyltransferase TrmD family. Homodimer.

The protein localises to the cytoplasm. The catalysed reaction is guanosine(37) in tRNA + S-adenosyl-L-methionine = N(1)-methylguanosine(37) in tRNA + S-adenosyl-L-homocysteine + H(+). In terms of biological role, specifically methylates guanosine-37 in various tRNAs. The polypeptide is tRNA (guanine-N(1)-)-methyltransferase (Campylobacter jejuni (strain RM1221)).